The sequence spans 325 residues: MASPIVDCTPYRDELLALASELPEVPRADLHGFLDEAKTLAARLPEGLAAALDTFNAVGSEDGYLLLRGLPVDDSELPETPTSTPAPLDRKRLVMEAMRALAGRRLGLHTGYQELRSGTVYHDVYPSPGAHYLSSETSETLLEFHTEMAYHILQPNYVMLACSRADHENRAETLVGSVRKALPLLDEKTRARLFDRKVPCCVDVAFRGGVDDPGAIANVKPLYGDANDPFLGYDRELLAPEDPADKEAVAHLSQALDDVTVGVKLVPGDVLIIDNFRTTHARTPFSPRWDGKDRWLHRVYIRTDRNGELSGGERAGDTISFSPRR.

The Fe cation site is built by His-145, Glu-147, and His-280. Arg-294 contributes to the 2-oxoglutarate binding site.

This sequence belongs to the clavaminate synthase family. Fe(2+) is required as a cofactor.

The catalysed reaction is deoxyamidinoproclavaminate + 2-oxoglutarate + O2 = amidinoproclavaminate + succinate + CO2. The enzyme catalyses proclavaminate + 2-oxoglutarate + O2 = dihydroclavaminate + succinate + CO2 + H2O. It catalyses the reaction dihydroclavaminate + 2-oxoglutarate + O2 = clavaminate + succinate + CO2 + H2O. It participates in antibiotic biosynthesis; clavulanate biosynthesis; clavulanate from D-glyceraldehyde 3-phosphate and L-arginine: step 3/8. It functions in the pathway antibiotic biosynthesis; clavulanate biosynthesis; clavulanate from D-glyceraldehyde 3-phosphate and L-arginine: step 5/8. Its pathway is antibiotic biosynthesis; clavulanate biosynthesis; clavulanate from D-glyceraldehyde 3-phosphate and L-arginine: step 6/8. The chain is Clavaminate synthase 2 (cs2) from Streptomyces clavuligerus.